Here is a 248-residue protein sequence, read N- to C-terminus: 3-deoxy-manno-octulosonate cytidylyltransferase (248 aa).

The protein belongs to the KdsB family.

It localises to the cytoplasm. It catalyses the reaction 3-deoxy-alpha-D-manno-oct-2-ulosonate + CTP = CMP-3-deoxy-beta-D-manno-octulosonate + diphosphate. It functions in the pathway nucleotide-sugar biosynthesis; CMP-3-deoxy-D-manno-octulosonate biosynthesis; CMP-3-deoxy-D-manno-octulosonate from 3-deoxy-D-manno-octulosonate and CTP: step 1/1. It participates in bacterial outer membrane biogenesis; lipopolysaccharide biosynthesis. Functionally, activates KDO (a required 8-carbon sugar) for incorporation into bacterial lipopolysaccharide in Gram-negative bacteria. The sequence is that of 3-deoxy-manno-octulosonate cytidylyltransferase from Shigella flexneri.